Consider the following 418-residue polypeptide: cAMP-dependent protein kinase type II-beta regulatory subunit (418 aa).

Residues 2 to 153 are dimerization and phosphorylation; sequence SIEIPAGLTE…RLQEACKDIL (152 aa). Residues 45 to 57 show a composition bias toward basic and acidic residues; the sequence is RKGTARFGHEGRT. The tract at residues 45 to 98 is disordered; that stretch reads RKGTARFGHEGRTWGDAGAAGGGGTPSKGVNFAEEPRHSDSENGEEEEEEAADA. Thr69 is subject to Phosphothreonine. Phosphoserine is present on residues Ser83 and Ser85. Residues 86 to 96 show a composition bias toward acidic residues; that stretch reads ENGEEEEEEAA. Ser114 carries the post-translational modification Phosphoserine. 3',5'-cyclic AMP is bound by residues 154–275, Glu223, Arg232, 276–418, Glu352, and Arg361; these read LFKN…ESLP and FLKS…EPTA.

It belongs to the cAMP-dependent kinase regulatory chain family. The inactive form of the enzyme is composed of two regulatory chains and two catalytic chains. Activation by cAMP produces two active catalytic monomers and a regulatory dimer that binds four cAMP molecules. Interacts with PRKACA and PRKACB. Interacts with the phosphorylated form of PJA2. Forms a complex composed of PRKAR2B, GSK3B and GSKIP through GSKIP interaction; facilitates PKA-induced phosphorylation and regulates GSK3B activity. Post-translationally, phosphorylated by the activated catalytic chain. Four types of regulatory chains are found: I-alpha, I-beta, II-alpha, and II-beta. Their expression varies among tissues and is in some cases constitutive and in others inducible.

It is found in the cytoplasm. Its subcellular location is the cell membrane. In terms of biological role, regulatory subunit of the cAMP-dependent protein kinases involved in cAMP signaling in cells. Type II regulatory chains mediate membrane association by binding to anchoring proteins, including the MAP2 kinase. This chain is cAMP-dependent protein kinase type II-beta regulatory subunit (PRKAR2B), found in Bos taurus (Bovine).